Consider the following 63-residue polypeptide: Adipokinetic prohormone type 1 (63 aa).

The first 22 residues, 1–22 (MVQRCLVVALLVVVVAAALCSA), serve as a signal peptide directing secretion. Glutamine 23 is modified (pyrrolidone carboxylic acid). Threonine 32 carries the post-translational modification Threonine amide.

The protein belongs to the AKH/HRTH/RPCH family. In terms of assembly, adipokinetic hormone precursor-related peptide (APRP) can form three type of disulfide-bond dimers: p1 (alpha-alpha), p2 (alpha-beta), and p3 (beta-beta).

It localises to the secreted. Its function is as follows. This hormone, released from cells in the corpora cardiaca, causes release of diglycerides from the fat body and stimulation of muscles to use these diglycerides as an energy source during energy-demanding processes. The sequence is that of Adipokinetic prohormone type 1 from Schistocerca gregaria (Desert locust).